The sequence spans 308 residues: Insoluble matrix shell protein 4 (308 aa).

3 disordered regions span residues 1–21 (HGNG…GNGY), 47–104 (NTNS…PNAV), and 134–250 (YDSN…NTNS). Over residues 47–99 (NTNSLNGNNNGNSNNNGNGNNNGNSNNNGNGNNNGNTNNGNSYDSNTNDDSNS) the composition is skewed to low complexity.

In terms of tissue distribution, component of the acid-insoluble organic matrix of the calcified shell.

Its subcellular location is the secreted. This is Insoluble matrix shell protein 4 from Ruditapes philippinarum (Japanese carpet shell).